The following is a 508-amino-acid chain: Steroid 17-alpha-hydroxylase/17,20 lyase (508 aa).

Asn-202 lines the substrate pocket. Cys-442 is a binding site for heme.

This sequence belongs to the cytochrome P450 family. Heme is required as a cofactor.

It localises to the endoplasmic reticulum membrane. The protein localises to the microsome membrane. It carries out the reaction a C21-steroid + reduced [NADPH--hemoprotein reductase] + O2 = a 17alpha-hydroxy-C21-steroid + oxidized [NADPH--hemoprotein reductase] + H2O + H(+). The enzyme catalyses progesterone + reduced [NADPH--hemoprotein reductase] + O2 = 17alpha-hydroxyprogesterone + oxidized [NADPH--hemoprotein reductase] + H2O + H(+). The catalysed reaction is pregnenolone + reduced [NADPH--hemoprotein reductase] + O2 = 17alpha-hydroxypregnenolone + oxidized [NADPH--hemoprotein reductase] + H2O + H(+). It catalyses the reaction 17alpha-hydroxyprogesterone + reduced [NADPH--hemoprotein reductase] + O2 = androst-4-ene-3,17-dione + acetate + oxidized [NADPH--hemoprotein reductase] + H2O + 2 H(+). It carries out the reaction 17alpha-hydroxyprogesterone + reduced [NADPH--hemoprotein reductase] + O2 = 16alpha,17alpha-dihydroxyprogesterone + oxidized [NADPH--hemoprotein reductase] + H2O + H(+). The enzyme catalyses 16alpha,17alpha-dihydroxyprogesterone + reduced [NADPH--hemoprotein reductase] + O2 = 6beta,16alpha,17alpha-trihydroxyprogesterone + oxidized [NADPH--hemoprotein reductase] + H2O + H(+). The catalysed reaction is 17alpha-hydroxypregnenolone + reduced [NADPH--hemoprotein reductase] + O2 = 3beta-hydroxyandrost-5-en-17-one + acetate + oxidized [NADPH--hemoprotein reductase] + H2O + 2 H(+). It catalyses the reaction 16alpha,17alpha-dihydroxypregnenolone + reduced [NADPH--hemoprotein reductase] + O2 = 3beta,16alpha-dihydroxy-androst-5-en-17-one + acetate + oxidized [NADPH--hemoprotein reductase] + H2O + 2 H(+). It carries out the reaction 3beta-hydroxyandrost-5-en-17-one + reduced [NADPH--hemoprotein reductase] + O2 = 3beta,16alpha-dihydroxy-androst-5-en-17-one + oxidized [NADPH--hemoprotein reductase] + H2O + H(+). The enzyme catalyses androst-4-ene-3,17-dione + reduced [NADPH--hemoprotein reductase] + O2 = 16alpha-hydroxyandrost-4-ene-3,17-dione + oxidized [NADPH--hemoprotein reductase] + H2O + H(+). The protein operates within steroid hormone biosynthesis. It functions in the pathway steroid biosynthesis; glucocorticoid biosynthesis. Regulated predominantly by intracellular cAMP levels. The 17,20-lyase activity is stimulated by cytochrome b5, which acts as an allosteric effector increasing the Vmax of the lyase activity. A cytochrome P450 monooxygenase involved in corticoid and androgen biosynthesis. Catalyzes 17-alpha hydroxylation of C21 steroids, which is common for both pathways. A second oxidative step, required only for androgen synthesis, involves an acyl-carbon cleavage. The 17-alpha hydroxy intermediates, as part of adrenal glucocorticoids biosynthesis pathway, are precursors of cortisol. Hydroxylates steroid hormones, pregnenolone and progesterone to form 17-alpha hydroxy metabolites, followed by the cleavage of the C17-C20 bond to form C19 steroids, dehydroepiandrosterone (DHEA) and androstenedione. Has 16-alpha hydroxylase activity. Catalyzes 16-alpha hydroxylation of 17-alpha hydroxy pregnenolone, followed by the cleavage of the C17-C20 bond to form 16-alpha-hydroxy DHEA. Also 16-alpha hydroxylates androgens, relevant for estriol synthesis. Mechanistically, uses molecular oxygen inserting one oxygen atom into a substrate, and reducing the second into a water molecule, with two electrons provided by NADPH via cytochrome P450 reductase (CPR; NADPH-ferrihemoprotein reductase). This chain is Steroid 17-alpha-hydroxylase/17,20 lyase (CYP17A1), found in Felis catus (Cat).